The chain runs to 257 residues: Flavodoxin/ferredoxin--NADP reductase (257 aa).

The 109-residue stretch at 2 to 110 (NPWINANVLK…EKSFGFFTLD (109 aa)) folds into the FAD-binding FR-type domain. FAD contacts are provided by residues 59–62 (RAYS), Tyr-75, 83–85 (KLS), and Thr-125. NADP(+) contacts are provided by residues 152-153 (VR), 182-183 (SR), Arg-193, 223-225 (NPA), and Asp-229. An FAD-binding site is contributed by 256–257 (YW).

Belongs to the ferredoxin--NADP reductase type 1 family. FAD is required as a cofactor.

Its subcellular location is the cytoplasm. The enzyme catalyses 2 reduced [2Fe-2S]-[ferredoxin] + NADP(+) + H(+) = 2 oxidized [2Fe-2S]-[ferredoxin] + NADPH. It catalyses the reaction reduced [flavodoxin] + NADP(+) = oxidized [flavodoxin] + NADPH + 2 H(+). Its function is as follows. Transports electrons between flavodoxin or ferredoxin and NADPH. This Buchnera aphidicola subsp. Schizaphis graminum (strain Sg) protein is Flavodoxin/ferredoxin--NADP reductase (fpr).